A 90-amino-acid chain; its full sequence is Small ribosomal subunit protein bS16 (90 aa).

Belongs to the bacterial ribosomal protein bS16 family.

This chain is Small ribosomal subunit protein bS16, found in Fervidobacterium nodosum (strain ATCC 35602 / DSM 5306 / Rt17-B1).